A 102-amino-acid chain; its full sequence is Envelope glycoprotein N (102 aa).

The signal sequence occupies residues 1-32; that stretch reads MGKVLRKPFAKAVPLLFLAATWLLTGVLPAGA. At 33–69 the chain is on the virion surface side; sequence SSPTNAAAASLTEAQDQFYSYTCNADTFSPSLTSFAS. Residues 70 to 90 form a helical membrane-spanning segment; the sequence is IWALLTLVLVIIASAIYLMYV. At 91 to 102 the chain is on the intravirion side; sequence CFNKFVNTLLTD.

This sequence belongs to the herpesviridae glycoprotein N family. Interacts (via N-terminus) with gM (via N-terminus). The gM-gN heterodimer forms the gCII complex. O-glycosylated. Contains alpha 2,6-sialic acid residues.

The protein resides in the virion membrane. Its subcellular location is the host membrane. It localises to the host Golgi apparatus. The protein localises to the host trans-Golgi network. Functionally, envelope glycoprotein necessary for proper maturation of gM and modulation of its membrane fusion activity. Also plays a critical role in virion morphogenesis. The protein is Envelope glycoprotein N of Epstein-Barr virus (strain AG876) (HHV-4).